The primary structure comprises 239 residues: UDP-2,3-diacylglucosamine hydrolase (239 aa).

Mn(2+) is bound by residues D8, H10, D41, N78, and H113. 78-79 serves as a coordination point for substrate; the sequence is NR. Positions 121, 159, 163, 166, and 194 each coordinate substrate. Residues H194 and H196 each contribute to the Mn(2+) site.

It belongs to the LpxH family. Mn(2+) is required as a cofactor.

Its subcellular location is the cell inner membrane. It catalyses the reaction UDP-2-N,3-O-bis[(3R)-3-hydroxytetradecanoyl]-alpha-D-glucosamine + H2O = 2-N,3-O-bis[(3R)-3-hydroxytetradecanoyl]-alpha-D-glucosaminyl 1-phosphate + UMP + 2 H(+). Its pathway is glycolipid biosynthesis; lipid IV(A) biosynthesis; lipid IV(A) from (3R)-3-hydroxytetradecanoyl-[acyl-carrier-protein] and UDP-N-acetyl-alpha-D-glucosamine: step 4/6. In terms of biological role, hydrolyzes the pyrophosphate bond of UDP-2,3-diacylglucosamine to yield 2,3-diacylglucosamine 1-phosphate (lipid X) and UMP by catalyzing the attack of water at the alpha-P atom. Involved in the biosynthesis of lipid A, a phosphorylated glycolipid that anchors the lipopolysaccharide to the outer membrane of the cell. The polypeptide is UDP-2,3-diacylglucosamine hydrolase (Shewanella sp. (strain MR-4)).